Here is a 1407-residue protein sequence, read N- to C-terminus: DNA-directed RNA polymerase subunit beta' (1407 aa).

Zn(2+) is bound by residues cysteine 70, cysteine 72, cysteine 85, and cysteine 88. Residues aspartate 460, aspartate 462, and aspartate 464 each contribute to the Mg(2+) site. Cysteine 814, cysteine 888, cysteine 895, and cysteine 898 together coordinate Zn(2+).

Belongs to the RNA polymerase beta' chain family. In terms of assembly, the RNAP catalytic core consists of 2 alpha, 1 beta, 1 beta' and 1 omega subunit. When a sigma factor is associated with the core the holoenzyme is formed, which can initiate transcription. Mg(2+) is required as a cofactor. Zn(2+) serves as cofactor.

The catalysed reaction is RNA(n) + a ribonucleoside 5'-triphosphate = RNA(n+1) + diphosphate. DNA-dependent RNA polymerase catalyzes the transcription of DNA into RNA using the four ribonucleoside triphosphates as substrates. The chain is DNA-directed RNA polymerase subunit beta' from Buchnera aphidicola subsp. Acyrthosiphon pisum (strain APS) (Acyrthosiphon pisum symbiotic bacterium).